The following is a 180-amino-acid chain: Crossover junction endodeoxyribonuclease RuvC (180 aa).

Active-site residues include D7, E66, and D138. Mg(2+) is bound by residues D7, E66, and D138.

It belongs to the RuvC family. In terms of assembly, homodimer which binds Holliday junction (HJ) DNA. The HJ becomes 2-fold symmetrical on binding to RuvC with unstacked arms; it has a different conformation from HJ DNA in complex with RuvA. In the full resolvosome a probable DNA-RuvA(4)-RuvB(12)-RuvC(2) complex forms which resolves the HJ. Requires Mg(2+) as cofactor.

It localises to the cytoplasm. It catalyses the reaction Endonucleolytic cleavage at a junction such as a reciprocal single-stranded crossover between two homologous DNA duplexes (Holliday junction).. Its function is as follows. The RuvA-RuvB-RuvC complex processes Holliday junction (HJ) DNA during genetic recombination and DNA repair. Endonuclease that resolves HJ intermediates. Cleaves cruciform DNA by making single-stranded nicks across the HJ at symmetrical positions within the homologous arms, yielding a 5'-phosphate and a 3'-hydroxyl group; requires a central core of homology in the junction. The consensus cleavage sequence is 5'-(A/T)TT(C/G)-3'. Cleavage occurs on the 3'-side of the TT dinucleotide at the point of strand exchange. HJ branch migration catalyzed by RuvA-RuvB allows RuvC to scan DNA until it finds its consensus sequence, where it cleaves and resolves the cruciform DNA. The polypeptide is Crossover junction endodeoxyribonuclease RuvC (Burkholderia multivorans (strain ATCC 17616 / 249)).